A 508-amino-acid chain; its full sequence is Strychnine-11-hydroxylase (508 aa).

Residues 5 to 25 traverse the membrane as a helical segment; it reads MSFLLLFSLCFLIHCFVFLLI. C445 is a binding site for heme.

It belongs to the cytochrome P450 family. Requires heme as cofactor.

The protein localises to the membrane. It carries out the reaction beta-colubrine + reduced [NADPH--hemoprotein reductase] + O2 = 11-demethylbrucine + oxidized [NADPH--hemoprotein reductase] + H2O + H(+). Its pathway is alkaloid biosynthesis. In terms of biological role, monooxygenase involved in the biosynthesis of curare monoterpene indole alkaloids (MIAs), natural products such as strychnine, a neurotoxic compound used as a pesticide to control rodents, and its pharmacologically active derivatives, including brucine, used to regulate blood pressure. Curare alkaloids act as animal glycine receptor antagonists. Catalyzes the conversion of beta-colubrine to 11-deMe brucine. The protein is Strychnine-11-hydroxylase of Strychnos nux-vomica (Poison nut).